The primary structure comprises 381 residues: Heme A synthase (381 aa).

A disordered region spans residues 1-23 (MARRPVFQEVTETTPPGTTPSGG). Residues 11–23 (TETTPPGTTPSGG) are compositionally biased toward low complexity. A run of 8 helical transmembrane segments spans residues 34 to 54 (GAIR…IALG), 120 to 140 (RLLG…FLAT), 151 to 171 (LLLL…MVHS), 185 to 205 (LATH…YVLA), 228 to 248 (TTGL…VAGI), 285 to 305 (LVQF…VVVF), 319 to 339 (AYVA…MNVL), and 342 to 362 (SPLP…TLIL). Position 290 (His290) interacts with heme. His350 is a heme binding site.

It belongs to the COX15/CtaA family. Type 2 subfamily. In terms of assembly, interacts with CtaB. Heme b is required as a cofactor.

Its subcellular location is the cell membrane. It catalyses the reaction Fe(II)-heme o + 2 A + H2O = Fe(II)-heme a + 2 AH2. It participates in porphyrin-containing compound metabolism; heme A biosynthesis; heme A from heme O: step 1/1. In terms of biological role, catalyzes the conversion of heme O to heme A by two successive hydroxylations of the methyl group at C8. The first hydroxylation forms heme I, the second hydroxylation results in an unstable dihydroxymethyl group, which spontaneously dehydrates, resulting in the formyl group of heme A. This Paracoccus denitrificans (strain Pd 1222) protein is Heme A synthase.